Reading from the N-terminus, the 525-residue chain is GMP synthase [glutamine-hydrolyzing] (525 aa).

Residues 9–207 enclose the Glutamine amidotransferase type-1 domain; the sequence is RILILDFGSQ…VRDICQCEAL (199 aa). Cysteine 86 acts as the Nucleophile in catalysis. Catalysis depends on residues histidine 181 and glutamate 183. One can recognise a GMPS ATP-PPase domain in the interval 208 to 400; the sequence is WTPAKIIDDA…LGLPYDMLYR (193 aa). An ATP-binding site is contributed by 235–241; that stretch reads SGGVDSS.

In terms of assembly, homodimer.

It carries out the reaction XMP + L-glutamine + ATP + H2O = GMP + L-glutamate + AMP + diphosphate + 2 H(+). The protein operates within purine metabolism; GMP biosynthesis; GMP from XMP (L-Gln route): step 1/1. Functionally, catalyzes the synthesis of GMP from XMP. The protein is GMP synthase [glutamine-hydrolyzing] of Klebsiella pneumoniae subsp. pneumoniae (strain ATCC 700721 / MGH 78578).